Reading from the N-terminus, the 313-residue chain is tRNA dimethylallyltransferase (313 aa).

Residue 11 to 18 (GPTASGKT) participates in ATP binding. 13–18 (TASGKT) contacts substrate. Interaction with substrate tRNA stretches follow at residues 36–39 (DSRQ) and 160–164 (QRLIR).

It belongs to the IPP transferase family. Monomer. Mg(2+) is required as a cofactor.

It carries out the reaction adenosine(37) in tRNA + dimethylallyl diphosphate = N(6)-dimethylallyladenosine(37) in tRNA + diphosphate. Functionally, catalyzes the transfer of a dimethylallyl group onto the adenine at position 37 in tRNAs that read codons beginning with uridine, leading to the formation of N6-(dimethylallyl)adenosine (i(6)A). This chain is tRNA dimethylallyltransferase, found in Chlorobaculum parvum (strain DSM 263 / NCIMB 8327) (Chlorobium vibrioforme subsp. thiosulfatophilum).